A 369-amino-acid polypeptide reads, in one-letter code: MKREKKDYYEILGVPRDATQEEIKRAYKRLVKEWHPDRHPENRKEAEQRFKEIQEAYEVLSDPQKRAMYDRFGYVGEQPTYQETESGGFFEDIFKEFENIFNRDIFDVFFGERPGQEEKREYARRGEDIRYEIEVTLSDLINGAEIPVEYERYETCPRCGGTGVEPNAGYINCPSCGGTGRIREERRSFFGYFVSERTCERCGGTGKIPREYCHECGGSGRVLRKVRRTVKIPPNVEDGTQLRITGGGNAGYYGGPYGDLIVIVRVKPDPRFKKSGSDLVYDVTIDYLQAILGTTVEVPLPEGGTTMLKIPPGTQPETVFRLKGKGLPNRYGRRGDLIVNVHVEIPKTLSREERKVLEDLAKKRGVTIG.

Residues Asp-7 to Gly-73 form the J domain. A CR-type zinc finger spans residues Gly-143–Lys-225. The Zn(2+) site is built by Cys-156, Cys-159, Cys-173, Cys-176, Cys-199, Cys-202, Cys-213, and Cys-216. 4 CXXCXGXG motif repeats span residues Cys-156–Gly-163, Cys-173–Gly-180, Cys-199–Gly-206, and Cys-213–Gly-220.

It belongs to the DnaJ family. In terms of assembly, homodimer. Zn(2+) is required as a cofactor.

Its subcellular location is the cytoplasm. Participates actively in the response to hyperosmotic and heat shock by preventing the aggregation of stress-denatured proteins and by disaggregating proteins, also in an autonomous, DnaK-independent fashion. Unfolded proteins bind initially to DnaJ; upon interaction with the DnaJ-bound protein, DnaK hydrolyzes its bound ATP, resulting in the formation of a stable complex. GrpE releases ADP from DnaK; ATP binding to DnaK triggers the release of the substrate protein, thus completing the reaction cycle. Several rounds of ATP-dependent interactions between DnaJ, DnaK and GrpE are required for fully efficient folding. Also involved, together with DnaK and GrpE, in the DNA replication of plasmids through activation of initiation proteins. The polypeptide is Chaperone protein DnaJ (Thermotoga petrophila (strain ATCC BAA-488 / DSM 13995 / JCM 10881 / RKU-1)).